We begin with the raw amino-acid sequence, 496 residues long: Hemophilin secretion modulator (496 aa).

The N-terminal stretch at 1–19 (MKRTLLCCLTLLSCPFLYA) is a signal peptide. Beta stranded transmembrane passes span 198-208 (WQGSVSAGYTY), 253-263 (DYEASLIKRYA), 268-277 (HGVALRALAF), 291-301 (TININAGYSYF), 305-315 (NQIGVSPLFEH), 327-337 (WGARAEWMHFI), 341-351 (KAFKLEAESKD), 365-374 (SSAFATFWKI), 380-389 (TFFGGLDVLD), 403-413 (QGVRLGLSKSW), 418-427 (NTTLLSSYRW), 446-455 (QNHTFVVQMP), 462-472 (MTPNLTYRYNH), and 486-495 (HNISFKLEHR).

Belongs to the Slam family.

Its subcellular location is the cell outer membrane. Its function is as follows. Part of a high affinity heme acquisition system. Mediates the secretion of the hemophilin HphA across the outer membrane into the extracellular environment. Plays a supporting role for full virulence. The chain is Hemophilin secretion modulator from Acinetobacter baumannii.